A 285-amino-acid polypeptide reads, in one-letter code: tRNA pseudouridine synthase A (285 aa).

The Nucleophile role is filled by Asp69. Tyr127 lines the substrate pocket.

Belongs to the tRNA pseudouridine synthase TruA family. Homodimer.

It catalyses the reaction uridine(38/39/40) in tRNA = pseudouridine(38/39/40) in tRNA. Its function is as follows. Formation of pseudouridine at positions 38, 39 and 40 in the anticodon stem and loop of transfer RNAs. This Pseudomonas aeruginosa (strain ATCC 15692 / DSM 22644 / CIP 104116 / JCM 14847 / LMG 12228 / 1C / PRS 101 / PAO1) protein is tRNA pseudouridine synthase A.